The sequence spans 530 residues: Cytochrome P450 monooxygenase aneG (530 aa).

N-linked (GlcNAc...) asparagine glycosylation occurs at Asn2. The chain crosses the membrane as a helical span at residues Trp43–Leu63. Asn92 carries an N-linked (GlcNAc...) asparagine glycan. Residue Cys474 participates in heme binding.

Belongs to the cytochrome P450 family. Heme is required as a cofactor.

The protein resides in the membrane. The catalysed reaction is asperaculane E + reduced [NADPH--hemoprotein reductase] + O2 = asperaculane G + oxidized [NADPH--hemoprotein reductase] + H2O + H(+). It carries out the reaction asperaculane G + reduced [NADPH--hemoprotein reductase] + O2 = aculene D + oxidized [NADPH--hemoprotein reductase] + CO2 + 2 H2O. The enzyme catalyses asperaculane E + 2 reduced [NADPH--hemoprotein reductase] + 2 O2 = aculene D + 2 oxidized [NADPH--hemoprotein reductase] + CO2 + 3 H2O + H(+). Its pathway is secondary metabolite biosynthesis. Cytochrome P450 monooxygenase; part of the gene cluster that mediates the biosynthesis of aculenes, a unique type of norsesquiterpenes that contain a nordaucane skeleton linked to an L-proline moiety and are of mixed biosynthetic origin. The pathway begins with the synthesis of dauca-4,7-diene by the terpene cyclase aneC using farnesyl pyrophosphate (FPP) as substrate. The cytochrome P450 monooxygenase aneF then performs the initial oxidation at C-12 of dauca-4,7-diene to yield asperaculane D. Asperaculane D is substrate of the cytochrome P450 monooxygenase aneD for C-10 hydroxylation to yield asperaculane E. The cytochrome P450 monooxygenase aneG then converts asperaculane E into aculene D via C-2 oxidation. The monomodular nonribosomal peptide synthtase aneB adenylates L-proline and the thiohydrolase aneE transfers this activated L-proline derivative to aculenes D and C to produce respectively aculenes B and A. The dioxygenase aneA converts aculene D into aculene C, and aculene B into aculene A by introducing the 5,6-alkene moiety. Asperculanes A, B, C and F, as well as 14-prolyl asperculane C, might be shunt products of the pathway. The sequence is that of Cytochrome P450 monooxygenase aneG from Aspergillus aculeatus (strain ATCC 16872 / CBS 172.66 / WB 5094).